The primary structure comprises 126 residues: Aspartate 1-decarboxylase (126 aa).

The active-site Schiff-base intermediate with substrate; via pyruvic acid is serine 25. The residue at position 25 (serine 25) is a Pyruvic acid (Ser). Threonine 57 contacts substrate. The active-site Proton donor is tyrosine 58. 73-75 is a binding site for substrate; the sequence is GAA.

The protein belongs to the PanD family. In terms of assembly, heterooctamer of four alpha and four beta subunits. Requires pyruvate as cofactor. Is synthesized initially as an inactive proenzyme, which is activated by self-cleavage at a specific serine bond to produce a beta-subunit with a hydroxyl group at its C-terminus and an alpha-subunit with a pyruvoyl group at its N-terminus.

It localises to the cytoplasm. The catalysed reaction is L-aspartate + H(+) = beta-alanine + CO2. It participates in cofactor biosynthesis; (R)-pantothenate biosynthesis; beta-alanine from L-aspartate: step 1/1. Catalyzes the pyruvoyl-dependent decarboxylation of aspartate to produce beta-alanine. This chain is Aspartate 1-decarboxylase, found in Psychromonas ingrahamii (strain DSM 17664 / CCUG 51855 / 37).